Here is a 1433-residue protein sequence, read N- to C-terminus: Probable serine/threonine-protein kinase DDB_G0277989 (1433 aa).

ATP-binding positions include 1 to 4 and Lys-41; that span reads MNEI. Positions 1–272 constitute a Protein kinase 1 domain; it reads MNEIIVGEYK…EFDDFTHPLS (272 aa). Asp-151 serves as the catalytic Proton acceptor. Composition is skewed to low complexity over residues 332 to 362 and 533 to 550; these read NNNNNNNNNNNNNNNNNNNNNNNNNNNNNNN and TATTTPTPTATTPTTTTA. 2 disordered regions span residues 332 to 366 and 521 to 550; these read NNNNNNNNNNNNNNNNNNNNNNNNNNNNNNNSDGP and PSSETTPRPPTPTATTTPTPTATTPTTTTA. The Protein kinase 2 domain occupies 1177–1433; it reads IYDKRYYIQK…QPHVCKSFKK (257 aa).

This sequence belongs to the protein kinase superfamily. Ser/Thr protein kinase family.

The enzyme catalyses L-seryl-[protein] + ATP = O-phospho-L-seryl-[protein] + ADP + H(+). It carries out the reaction L-threonyl-[protein] + ATP = O-phospho-L-threonyl-[protein] + ADP + H(+). The protein is Probable serine/threonine-protein kinase DDB_G0277989 of Dictyostelium discoideum (Social amoeba).